Consider the following 568-residue polypeptide: Phenylalanine--tRNA ligase beta subunit (568 aa).

Residues 278–353 (LTPKSFEVEL…IAYGYNEIEP (76 aa)) form the B5 domain. Mg(2+) is bound by residues Asp331, Asp337, Glu340, and Asp341.

This sequence belongs to the phenylalanyl-tRNA synthetase beta subunit family. Type 2 subfamily. Tetramer of two alpha and two beta subunits. Requires Mg(2+) as cofactor.

It is found in the cytoplasm. It carries out the reaction tRNA(Phe) + L-phenylalanine + ATP = L-phenylalanyl-tRNA(Phe) + AMP + diphosphate + H(+). The sequence is that of Phenylalanine--tRNA ligase beta subunit from Thermococcus gammatolerans (strain DSM 15229 / JCM 11827 / EJ3).